The sequence spans 423 residues: Glucoside xylosyltransferase 2 (423 aa).

Over 1 to 6 the chain is Cytoplasmic; sequence MRFRWK. The helical; Signal-anchor for type II membrane protein transmembrane segment at 7–26 threads the bilayer; it reads FFGSLLCVTGLLLVLYRQLG. Over 27-423 the chain is Lumenal; it reads NVPQPPPGPA…RVVVHIRSDV (397 aa). Residues 60–85 form a disordered region; it reads RRDARQGGKKKTNWNNVRAPEQKPNP. N-linked (GlcNAc...) asparagine glycosylation is found at Asn-215 and Asn-256.

The protein belongs to the glycosyltransferase 8 family.

The protein localises to the membrane. The catalysed reaction is 3-O-(beta-D-glucosyl)-L-seryl-[EGF-like domain protein] + UDP-alpha-D-xylose = 3-O-[alpha-D-xylosyl-(1-&gt;3)-beta-D-glucosyl]-L-seryl-[EGF-like domain protein] + UDP + H(+). Glycosyltransferase which elongates the O-linked glucose attached to EGF-like repeats in the extracellular domain of Notch proteins by catalyzing the addition of xylose. The chain is Glucoside xylosyltransferase 2 (gxylt2) from Xenopus laevis (African clawed frog).